The primary structure comprises 114 residues: Superoxide dismutase [Cu-Zn] (114 aa).

Residues histidine 37, histidine 39, and histidine 54 each contribute to the Cu cation site. Residues 48 to 76 (CMSSGPHFNPRSKEHGAPTDENRHLGDLG) are disordered. Zn(2+) is bound by residues histidine 54, histidine 62, histidine 71, and aspartate 74. A compositionally biased stretch (basic and acidic residues) spans 58–73 (RSKEHGAPTDENRHLG). Histidine 111 provides a ligand contact to Cu cation.

It belongs to the Cu-Zn superoxide dismutase family. In terms of assembly, homodimer. Requires Cu cation as cofactor. The cofactor is Zn(2+).

The protein localises to the cytoplasm. The enzyme catalyses 2 superoxide + 2 H(+) = H2O2 + O2. Destroys radicals which are normally produced within the cells and which are toxic to biological systems. In Drosophila obscura (Fruit fly), this protein is Superoxide dismutase [Cu-Zn].